The sequence spans 483 residues: Probable pectate lyase 12 (483 aa).

The N-terminal stretch at 1–24 (MMLQRSCIVLFFSLFLLVPQMVFS) is a signal peptide. Residues asparagine 27 and asparagine 50 are each glycosylated (N-linked (GlcNAc...) asparagine). Ca(2+) is bound by residues aspartate 220, aspartate 244, and aspartate 248. The active site involves arginine 300.

The protein belongs to the polysaccharide lyase 1 family. Requires Ca(2+) as cofactor.

It carries out the reaction Eliminative cleavage of (1-&gt;4)-alpha-D-galacturonan to give oligosaccharides with 4-deoxy-alpha-D-galact-4-enuronosyl groups at their non-reducing ends.. It functions in the pathway glycan metabolism; pectin degradation; 2-dehydro-3-deoxy-D-gluconate from pectin: step 2/5. This Arabidopsis thaliana (Mouse-ear cress) protein is Probable pectate lyase 12.